A 302-amino-acid chain; its full sequence is Recombination-associated protein RdgC (302 aa).

It belongs to the RdgC family.

It localises to the cytoplasm. The protein resides in the nucleoid. Its function is as follows. May be involved in recombination. The sequence is that of Recombination-associated protein RdgC from Actinobacillus pleuropneumoniae serotype 3 (strain JL03).